Reading from the N-terminus, the 853-residue chain is Cytochrome P450 monooxygenase mpaDE' (853 aa).

The Lumenal segment spans residues 1–6 (MESLSL). Residues 7–29 (TWITAIAVVLYLVQRYVRSYWRL) form a helical membrane-spanning segment. Over 30-853 (KDIPGPVLAK…DIENAIEGQK (824 aa)) the chain is Cytoplasmic. A heme-binding site is contributed by cysteine 449.

It belongs to the cytochrome P450 family. Heme serves as cofactor.

The protein resides in the endoplasmic reticulum membrane. The catalysed reaction is 5-methylorsellinate + reduced [NADPH--hemoprotein reductase] + O2 = 4,6-dihydroxy-2-(hydroxymethyl)-3-methylbenzoate + oxidized [NADPH--hemoprotein reductase] + H2O + H(+). The enzyme catalyses 4,6-dihydroxy-2-(hydroxymethyl)-3-methylbenzoate + H(+) = 5,7-dihydroxy-4-methylphthalide + H2O. It participates in secondary metabolite biosynthesis; terpenoid biosynthesis. Its function is as follows. Cytochrome P450 monooxygenase; part of the gene cluster that mediates the biosynthesis of mycophenolic acid (MPA), the first isolated antibiotic natural product in the world obtained from a culture of Penicillium brevicompactum in 1893. MpaDE' is an endoplasmic reticulum-bound enzyme that catalyzes the conversion of 5-methylorsellinic acid (5MOA) into the phthalide compound 5,7-dihydroxy-4,6-dimethylphthalide (DHMP). MpaDE' first catalyzes hydroxylation of 5-MOA to 4,6-dihydroxy-2-(hydroxymethyl)-3-methylbenzoic acid (DHMB), and then acts as a lactone synthase that catalyzes the ring closure to convert DHMB into DHMP. The first step of the pathway is the synthesis of 5-methylorsellinic acid (5MOA) by the cytosolic polyketide synthase mpaC. 5MOA is then converted to the phthalide compound 5,7-dihydroxy-4,6-dimethylphthalide (DHMP) by the endoplasmic reticulum-bound cytochrome P450 monooxygenase mpaDE. MpaDE first catalyzes hydroxylation of 5-MOA to 4,6-dihydroxy-2-(hydroxymethyl)-3-methylbenzoic acid (DHMB). MpaDE then acts as a lactone synthase that catalyzes the ring closure to convert DHMB into DHMP. The next step is the prenylation of DHMP by the Golgi apparatus-associated prenyltransferase mpaA to yield farnesyl-DHMP (FDHMP). The ER-bound oxygenase mpaB then mediates the oxidative cleavage the C19-C20 double bond in FDHMP to yield FDHMP-3C via a mycophenolic aldehyde intermediate. The O-methyltransferase mpaG catalyzes the methylation of FDHMP-3C to yield MFDHMP-3C. After the cytosolic methylation of FDHMP-3C, MFDHMP-3C enters into peroxisomes probably via free diffusion due to its low molecular weight. Upon a peroxisomal CoA ligation reaction, catalyzed by a beta-oxidation component enzyme acyl-CoA ligase ACL891, MFDHMP-3C-CoA would then be restricted to peroxisomes for the following beta-oxidation pathway steps. The peroxisomal beta-oxidation machinery than converts MFDHMP-3C-CoA into MPA_CoA, via a beta-oxidation chain-shortening process. Finally mpaH acts as a peroxisomal acyl-CoA hydrolase with high substrate specificity toward MPA-CoA to release the final product MPA. In Penicillium brevicompactum, this protein is Cytochrome P450 monooxygenase mpaDE'.